Reading from the N-terminus, the 323-residue chain is tRNA dimethylallyltransferase (323 aa).

Gly12 to Thr19 contributes to the ATP binding site. Thr14–Thr19 contacts substrate. Interaction with substrate tRNA stretches follow at residues Asp37–Leu40 and Gln161–Arg165.

The protein belongs to the IPP transferase family. As to quaternary structure, monomer. Mg(2+) serves as cofactor.

The catalysed reaction is adenosine(37) in tRNA + dimethylallyl diphosphate = N(6)-dimethylallyladenosine(37) in tRNA + diphosphate. Its function is as follows. Catalyzes the transfer of a dimethylallyl group onto the adenine at position 37 in tRNAs that read codons beginning with uridine, leading to the formation of N6-(dimethylallyl)adenosine (i(6)A). This chain is tRNA dimethylallyltransferase, found in Pseudomonas entomophila (strain L48).